Reading from the N-terminus, the 295-residue chain is Regucalcin (295 aa).

Residue Glu18 participates in a divalent metal cation binding. 3 residues coordinate substrate: Arg100, Asn102, and Asp120. A divalent metal cation-binding residues include Asn150 and Asp200. Asp200 serves as the catalytic Proton donor/acceptor.

The protein belongs to the SMP-30/CGR1 family. It depends on Zn(2+) as a cofactor. Mn(2+) serves as cofactor. Requires Ca(2+) as cofactor. Mg(2+) is required as a cofactor.

Its subcellular location is the cytoplasm. The catalysed reaction is D-glucono-1,5-lactone + H2O = D-gluconate + H(+). Its pathway is cofactor biosynthesis; L-ascorbate biosynthesis via UDP-alpha-D-glucuronate pathway; L-ascorbate from UDP-alpha-D-glucuronate: step 3/4. In terms of biological role, gluconolactonase with low activity towards other sugar lactones, including gulonolactone and galactonolactone. Catalyzes a key step in ascorbic acid (vitamin C) biosynthesis. Can also hydrolyze diisopropyl phosphorofluoridate and phenylacetate (in vitro). Calcium-binding protein. Modulates Ca(2+) signaling, and Ca(2+)-dependent cellular processes and enzyme activities. The chain is Regucalcin from Danio rerio (Zebrafish).